A 101-amino-acid polypeptide reads, in one-letter code: Putative defensin-like protein 307 (101 aa).

The signal sequence occupies residues 1–22 (MEKSALIFIGILLFSTCTSIMA). 3 cysteine pairs are disulfide-bonded: Cys-29–Cys-49, Cys-35–Cys-54, and Cys-40–Cys-56.

Belongs to the DEFL family.

It is found in the secreted. This Arabidopsis thaliana (Mouse-ear cress) protein is Putative defensin-like protein 307.